Consider the following 299-residue polypeptide: Lymphocyte antigen 6 complex locus protein G6f (299 aa).

Positions 1–19 (MAVLFLLLLFLCGLPQAET) are cleaved as a signal peptide. The 105-residue stretch at 20-124 (DSIQAIYVVL…YRYQNWRVYD (105 aa)) folds into the Ig-like V-type domain. At 20–237 (DSIQAIYVVL…APSADWDVAW (218 aa)) the chain is on the extracellular side. Cysteines 37 and 108 form a disulfide. The N-linked (GlcNAc...) asparagine glycan is linked to Asn90. Residues 238–258 (ILTLLLTVGQGFTIVVLGVML) form a helical membrane-spanning segment. Topologically, residues 259 to 299 (WRQRAQGAQHRNASFPQFKPEIQVYENIHLAHLSPPAPKTR) are cytoplasmic. Phosphotyrosine is present on Tyr283.

Homodimer; disulfide-linked. Interacts with GRB2 and GRB7 in a phosphorylation-dependent manner. In terms of processing, N-glycosylated.

It is found in the cell membrane. In terms of biological role, may play a role in the downstream signal transduction pathways involving GRB2 and GRB7. This Bos taurus (Bovine) protein is Lymphocyte antigen 6 complex locus protein G6f (LY6G6F).